The following is a 297-amino-acid chain: MFSNYRQYWDLTKPKVVALIVFTALVGMVLAIPGVPSWEQVRAGVLGFLGIWLAASAAAAINQLLDAHIDAQMARTSWRPLVVGKVKPWQVLVFASVLIVLSMVILVLWVNLITAVLTFASLIGYAVIYTVYLKRATSQNIVIGGLAGAMPPMLGWAAVTGMQGSSDWAYSSLLVLIIFIWTPPHFWALAIFRREDYAKAEIPMLPVTHGVVHTRKQIMVYSVVLALVCLLPYLVGMSGAFYLGGAIVLNAVFLWYAWRMLDPPDELFSMKMFYYSIVYLMALFAFLLVDHWILPWL.

9 consecutive transmembrane segments (helical) span residues Val-16–Pro-36, Val-45–Leu-65, Val-93–Ile-113, Thr-114–Lys-134, Ile-141–Gly-161, Ser-172–Phe-192, Val-223–Leu-243, Gly-244–Pro-264, and Ile-277–Leu-297.

This sequence belongs to the UbiA prenyltransferase family. Protoheme IX farnesyltransferase subfamily.

Its subcellular location is the cell inner membrane. It catalyses the reaction heme b + (2E,6E)-farnesyl diphosphate + H2O = Fe(II)-heme o + diphosphate. Its pathway is porphyrin-containing compound metabolism; heme O biosynthesis; heme O from protoheme: step 1/1. Functionally, converts heme B (protoheme IX) to heme O by substitution of the vinyl group on carbon 2 of heme B porphyrin ring with a hydroxyethyl farnesyl side group. This is Protoheme IX farnesyltransferase from Stenotrophomonas maltophilia (strain R551-3).